Here is a 490-residue protein sequence, read N- to C-terminus: ATP synthase subunit beta (490 aa).

173–180 (GGAGVGKT) is a binding site for ATP.

Belongs to the ATPase alpha/beta chains family. In terms of assembly, F-type ATPases have 2 components, CF(1) - the catalytic core - and CF(0) - the membrane proton channel. CF(1) has five subunits: alpha(3), beta(3), gamma(1), delta(1), epsilon(1). CF(0) has three main subunits: a(1), b(2) and c(9-12). The alpha and beta chains form an alternating ring which encloses part of the gamma chain. CF(1) is attached to CF(0) by a central stalk formed by the gamma and epsilon chains, while a peripheral stalk is formed by the delta and b chains.

It is found in the cell membrane. It carries out the reaction ATP + H2O + 4 H(+)(in) = ADP + phosphate + 5 H(+)(out). Produces ATP from ADP in the presence of a proton gradient across the membrane. The catalytic sites are hosted primarily by the beta subunits. The polypeptide is ATP synthase subunit beta (Bifidobacterium longum subsp. infantis (strain ATCC 15697 / DSM 20088 / JCM 1222 / NCTC 11817 / S12)).